The following is a 152-amino-acid chain: Deoxyuridine 5'-triphosphate nucleotidohydrolase (152 aa).

Substrate contacts are provided by residues 71-73 (RSG), asparagine 84, 88-90 (LID), and methionine 98.

The protein belongs to the dUTPase family. Requires Mg(2+) as cofactor.

It carries out the reaction dUTP + H2O = dUMP + diphosphate + H(+). The protein operates within pyrimidine metabolism; dUMP biosynthesis; dUMP from dCTP (dUTP route): step 2/2. Its function is as follows. This enzyme is involved in nucleotide metabolism: it produces dUMP, the immediate precursor of thymidine nucleotides and it decreases the intracellular concentration of dUTP so that uracil cannot be incorporated into DNA. The protein is Deoxyuridine 5'-triphosphate nucleotidohydrolase of Shewanella sp. (strain MR-7).